A 965-amino-acid polypeptide reads, in one-letter code: Glycine dehydrogenase (decarboxylating) 1 (965 aa).

The residue at position 713 (Lys713) is an N6-(pyridoxal phosphate)lysine.

It belongs to the GcvP family. The glycine cleavage system is composed of four proteins: P, T, L and H. Requires pyridoxal 5'-phosphate as cofactor.

It carries out the reaction N(6)-[(R)-lipoyl]-L-lysyl-[glycine-cleavage complex H protein] + glycine + H(+) = N(6)-[(R)-S(8)-aminomethyldihydrolipoyl]-L-lysyl-[glycine-cleavage complex H protein] + CO2. The glycine cleavage system catalyzes the degradation of glycine. The P protein binds the alpha-amino group of glycine through its pyridoxal phosphate cofactor; CO(2) is released and the remaining methylamine moiety is then transferred to the lipoamide cofactor of the H protein. The polypeptide is Glycine dehydrogenase (decarboxylating) 1 (Colwellia psychrerythraea (strain 34H / ATCC BAA-681) (Vibrio psychroerythus)).